We begin with the raw amino-acid sequence, 329 residues long: Endo-beta-N-acetylglucosaminidase F3 (329 aa).

The segment at residues 1–39 (MKKIFFAQCSILLLMLGSCSKMTEDMTPESVNKEASVKS) is a signal peptide (or 40, or 41). A GH18 domain is found at 48 to 329 (GVCIAYYITD…ANAVRDAVKN (282 aa)). Residue Thr-88 is glycosylated (O-linked (Man...) threonine). Glu-167 (proton donor) is an active-site residue.

Belongs to the glycosyl hydrolase 18 family. As to quaternary structure, monomer. Post-translationally, carbohydrate at Thr-88 consists of (2-OMe)Man1-4GlcNAcU1-4GlcU1-4Glc1-4(2-OMe)GlcU1-4[(2-OMe)Rham1-2]Man.

Its subcellular location is the secreted. It carries out the reaction an N(4)-(oligosaccharide-(1-&gt;3)-[oligosaccharide-(1-&gt;6)]-beta-D-Man-(1-&gt;4)-beta-D-GlcNAc-(1-&gt;4)-alpha-D-GlcNAc)-L-asparaginyl-[protein] + H2O = an oligosaccharide-(1-&gt;3)-[oligosaccharide-(1-&gt;6)]-beta-D-Man-(1-&gt;4)-D-GlcNAc + N(4)-(N-acetyl-beta-D-glucosaminyl)-L-asparaginyl-[protein]. Endohydrolysis of the di-N-acetylchitobiosyl unit in high-mannose glycopeptides and glycoproteins. Hydrolyzes bi- and triantennary glycans. The presence of a core-bound fucose greatly augments endo F3 activity on biantennary and, presumably, triantennary oligosaccharides. The protein is Endo-beta-N-acetylglucosaminidase F3 (endOF3) of Elizabethkingia meningoseptica (Chryseobacterium meningosepticum).